A 699-amino-acid polypeptide reads, in one-letter code: Extracellular matrix protein 2 (699 aa).

Residues 1–20 (MKIAVLFCFFLLIIFQTDFG) form the signal peptide. In terms of domain architecture, VWFC spans 101–158 (GHCLVKGITMYNKAVWSPEPCTTCLCSDGRVLCDETMCHPQRCPQTVIPEGECCPVCS). A compositionally biased stretch (basic and acidic residues) spans 176-186 (EFSGDSSEQRE). The tract at residues 176–316 (EFSGDSSEQR…PAPPRGTLRL (141 aa)) is disordered. Positions 212-224 (QSEEDEEVKEEDT) are enriched in acidic residues. The span at 243 to 260 (GDSRGGDRKQRPGEERRL) shows a compositional bias: basic and acidic residues. Over residues 270 to 291 (EEEEDEEEEGEEGEEDEEDEED) the composition is skewed to acidic residues. The Cell attachment site signature appears at 294-296 (RGD). Residues 307–344 (PAPPRGTLRLPSGCSLSYRTISCINAMLTQIPPLTAPQ) form the LRRNT domain. 13 LRR repeats span residues 368–388 (NLER…GPKA), 394–415 (KLMR…LPST), 416–436 (LEEL…SLSD), 439–459 (QLVT…NPLA), 465–484 (SLAY…QGLP), 486–507 (SIEE…CFNH), 510–530 (KINV…APLA), 536–557 (NLES…LPKS), 558–578 (LLHL…VFGH), 582–602 (GLEY…DRVS), 609–630 (SLRE…IQEM), 632–653 (ALHF…EICN), and 661–684 (NLEH…TFSC). N-linked (GlcNAc...) asparagine glycosylation occurs at asparagine 378. Residue asparagine 449 is glycosylated (N-linked (GlcNAc...) asparagine). An N-linked (GlcNAc...) asparagine glycan is attached at asparagine 506.

This sequence belongs to the small leucine-rich proteoglycan (SLRP) family. SLRP class I subfamily. As to quaternary structure, interacts with numerous extracellular matrix proteins. Interacts with MSL1 and RASSF1. In terms of tissue distribution, expressed predominantly in adipose tissue as well as female-specific organs such as mammary gland, ovary, and uterus.

It localises to the secreted. Its subcellular location is the extracellular space. The protein resides in the extracellular matrix. Functionally, promotes matrix assembly and cell adhesiveness. The sequence is that of Extracellular matrix protein 2 (ECM2) from Homo sapiens (Human).